We begin with the raw amino-acid sequence, 106 residues long: Transcriptional and immune response regulator (106 aa).

In terms of assembly, monomer. Interacts with NOTCH2 (via ANK repeats), the interaction inhibits the nuclear translocation of NOTCH2 N2ICD. Interacts (C-terminus) with CBY1 (C-terminus), TCIM competes with CTNNB1 for the interaction with CBY1. Ubiquitous. Expressed in thyroid papillary carcinoma. Expressed in liver, expression levels decrease in hepatocellular carcinoma. Slightly detected in normal lung, its expression is highly induced in lung cancer cells (at protein level).

It is found in the cytoplasm. The protein resides in the nucleus. The protein localises to the nucleolus. It localises to the nucleus speckle. Functionally, seems to be involved in the regulation of cell growth an differentiation, may play different and opposite roles depending on the tissue or cell type. May enhance the WNT-CTNNB1 pathway by relieving antagonistic activity of CBY1. Enhances the proliferation of follicular dendritic cells. Plays a role in the mitogen-activated MAPK2/3 signaling pathway, positively regulates G1-to-S-phase transition of the cell cycle. In endothelial cells, enhances key inflammatory mediators and inflammatory response through the modulation of NF-kappaB transcriptional regulatory activity. Involved in the regulation of heat shock response, seems to play a positive feedback with HSF1 to modulate heat-shock downstream gene expression. Plays a role in the regulation of hematopoiesis even if the mechanisms are unknown. In cancers such as thyroid or lung cancer, it has been described as promoter of cell proliferation, G1-to-S-phase transition and inhibitor of apoptosis. However, it negatively regulates self-renewal of liver cancer cells via suppresion of NOTCH2 signaling. This chain is Transcriptional and immune response regulator, found in Homo sapiens (Human).